The sequence spans 485 residues: Ribosomal protein uS12 methylthiotransferase RimO (485 aa).

The MTTase N-terminal domain occupies 19-135 (VKVGFISLGC…IGEVVAGILA (117 aa)). 6 residues coordinate [4Fe-4S] cluster: cysteine 28, cysteine 64, cysteine 98, cysteine 172, cysteine 176, and cysteine 179. Positions 158–387 (ATPGYTAYLK…MEVQQEIARR (230 aa)) constitute a Radical SAM core domain. Positions 390-461 (QLQVGRELEV…DYDLLGEATE (72 aa)) constitute a TRAM domain.

Belongs to the methylthiotransferase family. RimO subfamily. [4Fe-4S] cluster is required as a cofactor.

It is found in the cytoplasm. The catalysed reaction is L-aspartate(89)-[ribosomal protein uS12]-hydrogen + (sulfur carrier)-SH + AH2 + 2 S-adenosyl-L-methionine = 3-methylsulfanyl-L-aspartate(89)-[ribosomal protein uS12]-hydrogen + (sulfur carrier)-H + 5'-deoxyadenosine + L-methionine + A + S-adenosyl-L-homocysteine + 2 H(+). Functionally, catalyzes the methylthiolation of an aspartic acid residue of ribosomal protein uS12. This is Ribosomal protein uS12 methylthiotransferase RimO from Symbiobacterium thermophilum (strain DSM 24528 / JCM 14929 / IAM 14863 / T).